A 645-amino-acid polypeptide reads, in one-letter code: MLKTLLVQWLVFFFFFLIGSVVTAAEDDGSLSLCNCDDEDSLFSYETILNSQKVGDFLIAIAYFSIPIELVYFVSRTNVPSPYNWVVCEFIAFIVLCGMTHLLAGFTYGPHWPWVMTAVTVFKMLTGIVSFLTALSLVTLLPLLLKAKVREFMLSKKTRELDREVGIIMKQTETSLHVRMLTTKIRTSLDRHTILYTTLVELSKTLGLKNCAVWIPNEIKTEMNLTHELRPRIDDENENEHFGGYAGFSIPISESDVVRIKRSEEVNMLSPGSVLASVTSRGKSGPTVGIRVPMLRVCNFKGGTPEAIHMCYAILVCVLPLRQPQAWTYQELEIVKVVADQVAVAISHAVILEESQLMREKLAEQNRALQVARENALRANQAKAAFEQMMSDAMRCPVRSILGLLPLILQDGKLPENQTVIVDAMRRTSELLVQLVNNAGDINNGTIRAAETHYFSLHSVVKESACVARCLCMANGFGFSAEVYRALPDYVVGDDRKVFQAILHMLGVLMNRKIKGNVTFWVFPESGNSDVSERKDIQEAVWRHCYSKEYMEVRFGFEVTAEGEESSSSSSGSNLEEEEENPSLNACQNIVKYMQGNIRVVEDGLGLVKSVSVVFRFQLRRSMMSRGGGYSGETFRTSTPPSTSH.

Helical transmembrane passes span 5–25, 54–74, 86–106, and 125–145; these read LLVQ…VTAA, VGDF…VYFV, VVCE…LAGF, and LTGI…PLLL. Residues Cys-97 and His-101 each coordinate Cu cation. The 157-residue stretch at 190-346 folds into the GAF domain; that stretch reads DRHTILYTTL…VVADQVAVAI (157 aa). Positions 389–623 constitute a Histidine kinase domain; it reads MMSDAMRCPV…VFRFQLRRSM (235 aa).

This sequence belongs to the ethylene receptor family. Heteromer with ETR1. It depends on Cu cation as a cofactor. Post-translationally, autophosphorylated predominantly on Ser residues. As to expression, expressed in etiolated seedlings, leaves, roots and stems. Highly expressed in flowers, stamens, pollen cells, tapetum cells, carpels and ovules.

The protein resides in the endoplasmic reticulum membrane. Functionally, ethylene receptor related to bacterial two-component regulators. Acts as a redundant negative regulator of ethylene signaling. The polypeptide is Ethylene response sensor 2 (ERS2) (Arabidopsis thaliana (Mouse-ear cress)).